The sequence spans 157 residues: D-aminoacyl-tRNA deacylase (157 aa).

Positions 137 to 138 (GP) match the Gly-cisPro motif, important for rejection of L-amino acids motif.

This sequence belongs to the DTD family. Homodimer.

Its subcellular location is the cytoplasm. It catalyses the reaction glycyl-tRNA(Ala) + H2O = tRNA(Ala) + glycine + H(+). The catalysed reaction is a D-aminoacyl-tRNA + H2O = a tRNA + a D-alpha-amino acid + H(+). Functionally, an aminoacyl-tRNA editing enzyme that deacylates mischarged D-aminoacyl-tRNAs. Also deacylates mischarged glycyl-tRNA(Ala), protecting cells against glycine mischarging by AlaRS. Acts via tRNA-based rather than protein-based catalysis; rejects L-amino acids rather than detecting D-amino acids in the active site. By recycling D-aminoacyl-tRNA to D-amino acids and free tRNA molecules, this enzyme counteracts the toxicity associated with the formation of D-aminoacyl-tRNA entities in vivo and helps enforce protein L-homochirality. This is D-aminoacyl-tRNA deacylase from Roseiflexus castenholzii (strain DSM 13941 / HLO8).